A 393-amino-acid chain; its full sequence is Riboflavin biosynthesis protein RibBA (393 aa).

A DHBP synthase region spans residues 1 to 200; that stretch reads MQFDNIDSAL…IDDLIEYRKK (200 aa). Residues 27 to 28, Asp-32, 139 to 143, and Glu-163 each bind D-ribulose 5-phosphate; these read RE and RNGHT. A Mg(2+)-binding site is contributed by Glu-28. His-142 provides a ligand contact to Mg(2+). The interval 201–393 is GTP cyclohydrolase II; that stretch reads LEPEIEFKAK…TKKIKMGHLI (193 aa). Residue 249 to 253 coordinates GTP; it reads RLHSA. Residues Cys-254, Cys-265, and Cys-267 each contribute to the Zn(2+) site. GTP-binding positions include Gln-270, 291 to 293, and Thr-313; that span reads EGR. Residue Asp-325 is the Proton acceptor; for GTP cyclohydrolase activity of the active site. Arg-327 (nucleophile; for GTP cyclohydrolase activity) is an active-site residue. Residues Ser-348 and Lys-353 each contribute to the GTP site.

It in the N-terminal section; belongs to the DHBP synthase family. The protein in the C-terminal section; belongs to the GTP cyclohydrolase II family. Mg(2+) serves as cofactor. The cofactor is Mn(2+). Requires Zn(2+) as cofactor.

The enzyme catalyses D-ribulose 5-phosphate = (2S)-2-hydroxy-3-oxobutyl phosphate + formate + H(+). It carries out the reaction GTP + 4 H2O = 2,5-diamino-6-hydroxy-4-(5-phosphoribosylamino)-pyrimidine + formate + 2 phosphate + 3 H(+). Its pathway is cofactor biosynthesis; riboflavin biosynthesis; 2-hydroxy-3-oxobutyl phosphate from D-ribulose 5-phosphate: step 1/1. The protein operates within cofactor biosynthesis; riboflavin biosynthesis; 5-amino-6-(D-ribitylamino)uracil from GTP: step 1/4. Catalyzes the conversion of D-ribulose 5-phosphate to formate and 3,4-dihydroxy-2-butanone 4-phosphate. In terms of biological role, catalyzes the conversion of GTP to 2,5-diamino-6-ribosylamino-4(3H)-pyrimidinone 5'-phosphate (DARP), formate and pyrophosphate. The polypeptide is Riboflavin biosynthesis protein RibBA (Staphylococcus aureus (strain MSSA476)).